Reading from the N-terminus, the 1404-residue chain is DNA-directed RNA polymerase subunit beta' (1404 aa).

Zn(2+)-binding residues include Cys70, Cys72, Cys85, and Cys88. Residues Asp460, Asp462, and Asp464 each coordinate Mg(2+). Zn(2+) contacts are provided by Cys814, Cys888, Cys895, and Cys898.

It belongs to the RNA polymerase beta' chain family. In terms of assembly, the RNAP catalytic core consists of 2 alpha, 1 beta, 1 beta' and 1 omega subunit. When a sigma factor is associated with the core the holoenzyme is formed, which can initiate transcription. Requires Mg(2+) as cofactor. Zn(2+) serves as cofactor.

The catalysed reaction is RNA(n) + a ribonucleoside 5'-triphosphate = RNA(n+1) + diphosphate. Functionally, DNA-dependent RNA polymerase catalyzes the transcription of DNA into RNA using the four ribonucleoside triphosphates as substrates. This is DNA-directed RNA polymerase subunit beta' from Shewanella loihica (strain ATCC BAA-1088 / PV-4).